The following is a 322-amino-acid chain: MKILGIETSHDDASVALFSENKVEILLTISQFELHEQFGGTVPELASREHSRNLAIILEKLLGKNIDFSTIDAIAYTKNPGLIGPLKIGFLFASALSLFFNKPLIPIDHLLGHFWSAAIENDLEFPVLSLLISGGHTQLIFAENKNNLEIIGSTVDDALGEIYDKIGRSLGCGYPGGPKIDLIWQQNNVRNMELIDFSLPKVLENPLDFSFSGLKTQVINYTNNLKENYLFSQKKVVEIAVSFQKTVIKYLKRQLDLALKTKKNVKTITLVGGVAANSEIRKLIKTYENKYKVVIPKKEFCTDNGAMIAKAAQIFLKFNEEK.

Fe cation is bound by residues His109 and His113. Substrate contacts are provided by residues 131–135 (LISGG), Asp164, Gly177, Asp181, and Asn277. Asp303 lines the Fe cation pocket.

The protein belongs to the KAE1 / TsaD family. Fe(2+) serves as cofactor.

The protein resides in the cytoplasm. It catalyses the reaction L-threonylcarbamoyladenylate + adenosine(37) in tRNA = N(6)-L-threonylcarbamoyladenosine(37) in tRNA + AMP + H(+). Required for the formation of a threonylcarbamoyl group on adenosine at position 37 (t(6)A37) in tRNAs that read codons beginning with adenine. Is involved in the transfer of the threonylcarbamoyl moiety of threonylcarbamoyl-AMP (TC-AMP) to the N6 group of A37, together with TsaE and TsaB. TsaD likely plays a direct catalytic role in this reaction. This is tRNA N6-adenosine threonylcarbamoyltransferase from Mesomycoplasma hyopneumoniae (strain 232) (Mycoplasma hyopneumoniae).